The following is a 416-amino-acid chain: 3-phosphoshikimate 1-carboxyvinyltransferase (416 aa).

Lys-20, Ser-21, and Arg-25 together coordinate 3-phosphoshikimate. Lys-20 serves as a coordination point for phosphoenolpyruvate. Phosphoenolpyruvate-binding residues include Gly-88 and Arg-116. The 3-phosphoshikimate site is built by Ser-159, Ser-160, Gln-161, Ser-186, Asp-300, and Lys-327. Gln-161 is a binding site for phosphoenolpyruvate. The active-site Proton acceptor is the Asp-300. Positions 331 and 373 each coordinate phosphoenolpyruvate.

The protein belongs to the EPSP synthase family. Monomer.

Its subcellular location is the cytoplasm. It carries out the reaction 3-phosphoshikimate + phosphoenolpyruvate = 5-O-(1-carboxyvinyl)-3-phosphoshikimate + phosphate. It participates in metabolic intermediate biosynthesis; chorismate biosynthesis. Its function is as follows. Catalyzes the transfer of the enolpyruvyl moiety of phosphoenolpyruvate (PEP) to the 5-hydroxyl of shikimate-3-phosphate (S3P) to produce enolpyruvyl shikimate-3-phosphate and inorganic phosphate. This chain is 3-phosphoshikimate 1-carboxyvinyltransferase, found in Archaeoglobus fulgidus (strain ATCC 49558 / DSM 4304 / JCM 9628 / NBRC 100126 / VC-16).